A 57-amino-acid chain; its full sequence is Potassium channel toxin alpha-KTx 17.2 (57 aa).

Residues 1 to 26 (MKTIIVLLLLTIVAAAVVESSPKARR) form the signal peptide. Intrachain disulfides connect Cys30–Cys46, Cys36–Cys51, and Cys40–Cys53.

Belongs to the short scorpion toxin superfamily. Potassium channel inhibitor family. Alpha-KTx 17 subfamily. In terms of tissue distribution, expressed by the venom gland.

It is found in the secreted. Its function is as follows. Inhibits voltage-gated potassium channels. The sequence is that of Potassium channel toxin alpha-KTx 17.2 from Lychas mucronatus (Chinese swimming scorpion).